A 184-amino-acid polypeptide reads, in one-letter code: Large ribosomal subunit protein uL5 (184 aa).

The protein belongs to the universal ribosomal protein uL5 family. As to quaternary structure, part of the 50S ribosomal subunit; part of the 5S rRNA/L5/L18/L25 subcomplex. Contacts the 5S rRNA and the P site tRNA. Forms a bridge to the 30S subunit in the 70S ribosome.

Its function is as follows. This is one of the proteins that bind and probably mediate the attachment of the 5S RNA into the large ribosomal subunit, where it forms part of the central protuberance. In the 70S ribosome it contacts protein S13 of the 30S subunit (bridge B1b), connecting the 2 subunits; this bridge is implicated in subunit movement. Contacts the P site tRNA; the 5S rRNA and some of its associated proteins might help stabilize positioning of ribosome-bound tRNAs. The sequence is that of Large ribosomal subunit protein uL5 from Wolinella succinogenes (strain ATCC 29543 / DSM 1740 / CCUG 13145 / JCM 31913 / LMG 7466 / NCTC 11488 / FDC 602W) (Vibrio succinogenes).